A 164-amino-acid polypeptide reads, in one-letter code: Phosphopantetheine adenylyltransferase (164 aa).

S9 is a substrate binding site. ATP is bound by residues 9-10 and H17; that span reads SF. The substrate site is built by K41, L78, and R92. Residues 93–95, E103, and 128–134 contribute to the ATP site; these read GLR and GRVITST.

It belongs to the bacterial CoaD family. As to quaternary structure, homohexamer. The cofactor is Mg(2+).

It localises to the cytoplasm. The enzyme catalyses (R)-4'-phosphopantetheine + ATP + H(+) = 3'-dephospho-CoA + diphosphate. It participates in cofactor biosynthesis; coenzyme A biosynthesis; CoA from (R)-pantothenate: step 4/5. In terms of biological role, reversibly transfers an adenylyl group from ATP to 4'-phosphopantetheine, yielding dephospho-CoA (dPCoA) and pyrophosphate. The polypeptide is Phosphopantetheine adenylyltransferase (Bartonella bacilliformis (strain ATCC 35685 / KC583 / Herrer 020/F12,63)).